Here is a 91-residue protein sequence, read N- to C-terminus: Small ribosomal subunit protein uS19 (91 aa).

Belongs to the universal ribosomal protein uS19 family.

In terms of biological role, protein S19 forms a complex with S13 that binds strongly to the 16S ribosomal RNA. This chain is Small ribosomal subunit protein uS19, found in Colwellia psychrerythraea (strain 34H / ATCC BAA-681) (Vibrio psychroerythus).